Here is a 364-residue protein sequence, read N- to C-terminus: Tyrosine-protein phosphatase YVH1 (364 aa).

Residues 11–173 form the Tyrosine-protein phosphatase domain; that stretch reads EVTRILGGIY…LHLFEKMGGD (163 aa). Residue cysteine 117 is the Phosphocysteine intermediate of the active site. Position 196 is a phosphoserine (serine 196).

The protein belongs to the protein-tyrosine phosphatase family. Non-receptor class dual specificity subfamily.

It carries out the reaction O-phospho-L-tyrosyl-[protein] + H2O = L-tyrosyl-[protein] + phosphate. Its function is as follows. May be directly involved in signal transduction and/or cell cycle regulation. It is necessary for maintaining growth rate or spore germination. Could show both activity toward tyrosine-protein phosphate as well as with serine-protein phosphate. This Saccharomyces cerevisiae (strain ATCC 204508 / S288c) (Baker's yeast) protein is Tyrosine-protein phosphatase YVH1 (YVH1).